We begin with the raw amino-acid sequence, 120 residues long: NADH dehydrogenase [ubiquinone] 1 subunit C2 (120 aa).

Residue methionine 1 is modified to N-acetylmethionine. The chain crosses the membrane as a helical span at residues glycine 57–leucine 76.

The protein belongs to the complex I NDUFC2 subunit family. In terms of assembly, complex I is composed of 45 different subunits. Interacts with TMEM242. Post-translationally, there is a minor unacetylated form of subunit B14.5b.

It localises to the mitochondrion inner membrane. In terms of biological role, accessory subunit of the mitochondrial membrane respiratory chain NADH dehydrogenase (Complex I), that is believed not to be involved in catalysis but required for the complex assembly. Complex I functions in the transfer of electrons from NADH to the respiratory chain. The immediate electron acceptor for the enzyme is believed to be ubiquinone. The sequence is that of NADH dehydrogenase [ubiquinone] 1 subunit C2 from Bos taurus (Bovine).